Consider the following 309-residue polypeptide: Olfactory receptor 8U1 (309 aa).

The Extracellular segment spans residues 1 to 25 (MAHINCTQATEFILVGLTDHQELKM). A glycan (N-linked (GlcNAc...) asparagine) is linked at N5. A helical membrane pass occupies residues 26–46 (PLFVLFLSIYLFTVVGNLGLI). The Cytoplasmic segment spans residues 47-54 (LLIRADTS). A helical membrane pass occupies residues 55–75 (LNTPMYFFLSNLAFVDFCYSS). Residues 76-99 (VITPKMLGNFLYKQNVISFDACAT) are Extracellular-facing. The cysteines at positions 97 and 189 are disulfide-linked. A helical transmembrane segment spans residues 100-120 (QLGCFLTFMISESLLLASMAY). At 121 to 139 (DRYVAICNPLLYMVVMTPG) the chain is on the cytoplasmic side. The helical transmembrane segment at 140 to 160 (ICIQLVAVPYSYSFLMALFHT) threads the bilayer. The Extracellular portion of the chain corresponds to 161–197 (ILTFRLSYCHSNIVNHFYCDDMPLLRLTCSDTRFKQL). The helical transmembrane segment at 198-217 (WIFACAGIMFISSLLIVFVS) threads the bilayer. Over 218-237 (YMFIISAILRMHSAEGRQKA) the chain is Cytoplasmic. The helical transmembrane segment at 238–258 (FSTCGSHMLAVTIFYGTLIFM) threads the bilayer. Residues 259-271 (YLQPSSSHALDTD) lie on the Extracellular side of the membrane. A helical membrane pass occupies residues 272–292 (KMASVFYTVIIPMLNPLIYSL). At 293-309 (QNKEVKEALKKIIINKN) the chain is on the cytoplasmic side.

The protein belongs to the G-protein coupled receptor 1 family.

Its subcellular location is the cell membrane. Its function is as follows. Odorant receptor. The polypeptide is Olfactory receptor 8U1 (OR8U1) (Homo sapiens (Human)).